The sequence spans 299 residues: Protease HtpX homolog (299 aa).

2 consecutive transmembrane segments (helical) span residues 15 to 35 (ILLL…GYLF) and 39 to 59 (GLGG…SMIF). Residue His143 coordinates Zn(2+). The active site involves Glu144. His147 is a Zn(2+) binding site. 2 consecutive transmembrane segments (helical) span residues 158–178 (IAVA…RMMW) and 198–218 (IIML…ATLV). Glu227 provides a ligand contact to Zn(2+).

Belongs to the peptidase M48B family. Zn(2+) serves as cofactor.

Its subcellular location is the cell membrane. The sequence is that of Protease HtpX homolog from Streptococcus pneumoniae (strain Taiwan19F-14).